The chain runs to 149 residues: Transcriptional repressor NrdR (149 aa).

A zinc finger lies at 3–34 (CPFCGTQDTKVIDSRLVADGASVRRRRECNHC). Positions 49–139 (PRVIKTDGSR…VYRSFEDIRE (91 aa)) constitute an ATP-cone domain.

Belongs to the NrdR family. Requires Zn(2+) as cofactor.

In terms of biological role, negatively regulates transcription of bacterial ribonucleotide reductase nrd genes and operons by binding to NrdR-boxes. This is Transcriptional repressor NrdR from Idiomarina loihiensis (strain ATCC BAA-735 / DSM 15497 / L2-TR).